The following is a 331-amino-acid chain: Pantothenate kinase (331 aa).

Residue 109–116 (GSVAVGKS) participates in ATP binding.

Belongs to the prokaryotic pantothenate kinase family.

It is found in the cytoplasm. The enzyme catalyses (R)-pantothenate + ATP = (R)-4'-phosphopantothenate + ADP + H(+). It participates in cofactor biosynthesis; coenzyme A biosynthesis; CoA from (R)-pantothenate: step 1/5. The sequence is that of Pantothenate kinase from Sinorhizobium fredii (strain NBRC 101917 / NGR234).